Reading from the N-terminus, the 199-residue chain is Recombination protein RecR (199 aa).

The C4-type zinc-finger motif lies at 57–72 (CQSCRTYTEESLCPIC). A Toprim domain is found at 81–176 (STICVVETPA…VISRIAHGVP (96 aa)).

It belongs to the RecR family.

May play a role in DNA repair. It seems to be involved in an RecBC-independent recombinational process of DNA repair. It may act with RecF and RecO. The protein is Recombination protein RecR of Shewanella sp. (strain MR-4).